We begin with the raw amino-acid sequence, 103 residues long: Phosphoribosyl-ATP pyrophosphatase (103 aa).

Belongs to the PRA-PH family.

The protein resides in the cytoplasm. It catalyses the reaction 1-(5-phospho-beta-D-ribosyl)-ATP + H2O = 1-(5-phospho-beta-D-ribosyl)-5'-AMP + diphosphate + H(+). It functions in the pathway amino-acid biosynthesis; L-histidine biosynthesis; L-histidine from 5-phospho-alpha-D-ribose 1-diphosphate: step 2/9. This Cereibacter sphaeroides (strain KD131 / KCTC 12085) (Rhodobacter sphaeroides) protein is Phosphoribosyl-ATP pyrophosphatase.